The sequence spans 215 residues: ATP-dependent dethiobiotin synthetase BioD (215 aa).

13 to 18 (DIGKTV) provides a ligand contact to ATP. Mg(2+) is bound at residue threonine 17. Lysine 38 is a catalytic residue. Threonine 42 serves as a coordination point for substrate. Residues aspartate 50, 115-118 (EGAG), and 175-176 (NH) each bind ATP. 2 residues coordinate Mg(2+): aspartate 50 and glutamate 115.

This sequence belongs to the dethiobiotin synthetase family. Homodimer. Requires Mg(2+) as cofactor.

The protein localises to the cytoplasm. The catalysed reaction is (7R,8S)-7,8-diammoniononanoate + CO2 + ATP = (4R,5S)-dethiobiotin + ADP + phosphate + 3 H(+). The protein operates within cofactor biosynthesis; biotin biosynthesis; biotin from 7,8-diaminononanoate: step 1/2. Functionally, catalyzes a mechanistically unusual reaction, the ATP-dependent insertion of CO2 between the N7 and N8 nitrogen atoms of 7,8-diaminopelargonic acid (DAPA, also called 7,8-diammoniononanoate) to form a ureido ring. The chain is ATP-dependent dethiobiotin synthetase BioD from Neisseria meningitidis serogroup B (strain ATCC BAA-335 / MC58).